Here is a 517-residue protein sequence, read N- to C-terminus: Bifunctional purine biosynthesis protein PurH (517 aa).

Positions 1–145 (MSPLALVSVS…KNHKDVSVLV (145 aa)) constitute an MGS-like domain.

Belongs to the PurH family.

The catalysed reaction is (6R)-10-formyltetrahydrofolate + 5-amino-1-(5-phospho-beta-D-ribosyl)imidazole-4-carboxamide = 5-formamido-1-(5-phospho-D-ribosyl)imidazole-4-carboxamide + (6S)-5,6,7,8-tetrahydrofolate. The enzyme catalyses IMP + H2O = 5-formamido-1-(5-phospho-D-ribosyl)imidazole-4-carboxamide. Its pathway is purine metabolism; IMP biosynthesis via de novo pathway; 5-formamido-1-(5-phospho-D-ribosyl)imidazole-4-carboxamide from 5-amino-1-(5-phospho-D-ribosyl)imidazole-4-carboxamide (10-formyl THF route): step 1/1. The protein operates within purine metabolism; IMP biosynthesis via de novo pathway; IMP from 5-formamido-1-(5-phospho-D-ribosyl)imidazole-4-carboxamide: step 1/1. This Prochlorococcus marinus (strain MIT 9301) protein is Bifunctional purine biosynthesis protein PurH.